The chain runs to 122 residues: MYAFFTIFIGGGLGAVSRHYLSVYLMRMTAINAPWAILLINLLGCLGIGFFSAYLSRLTHAQLWQWFLLTGFLGGFTTYSTFTLNLIQLGEIHLASAFLNLFLHLGGGILCCFVGFWLARAV.

4 consecutive transmembrane segments (helical) span residues 1–21, 35–55, 67–87, and 98–118; these read MYAF…RHYL, WAIL…SAYL, FLLT…LNLI, and FLNL…GFWL. Residues Gly-74 and Thr-77 each contribute to the Na(+) site.

This sequence belongs to the fluoride channel Fluc/FEX (TC 1.A.43) family.

Its subcellular location is the cell inner membrane. The catalysed reaction is fluoride(in) = fluoride(out). With respect to regulation, na(+) is not transported, but it plays an essential structural role and its presence is essential for fluoride channel function. Fluoride-specific ion channel. Important for reducing fluoride concentration in the cell, thus reducing its toxicity. The polypeptide is Fluoride-specific ion channel FluC (Dichelobacter nodosus (strain VCS1703A)).